The following is a 184-amino-acid chain: MKKQILALVCGVIFSSSTWAHNLQLEQSLPSVKVSEYGEIVLSGKDTVFQPWGSAELAGKVRVVHHLAGRTAAKEXNQSMIDVIKASHFNPVKYQTTTIINADDAIVGTGMFVKNGAKKGKQENPHSQVVLDDKSAVKNAWGLNSKDSAIIVLDKTGKVKFVKEGKLSDSDIQTVISLVNGLTK.

Residues 1–20 (MKKQILALVCGVIFSSSTWA) form the signal peptide.

This sequence to E.coli YtfJ.

The protein resides in the periplasm. This is an uncharacterized protein from Haemophilus influenzae (strain ATCC 51907 / DSM 11121 / KW20 / Rd).